The primary structure comprises 97 residues: Citrate lyase acyl carrier protein (97 aa).

S14 is subject to O-(phosphoribosyl dephospho-coenzyme A)serine.

Belongs to the CitD family. As to quaternary structure, oligomer with a subunit composition of (alpha,beta,gamma)6.

The protein localises to the cytoplasm. Covalent carrier of the coenzyme of citrate lyase. The chain is Citrate lyase acyl carrier protein from Leuconostoc citreum (strain KM20).